A 388-amino-acid chain; its full sequence is Chorismate synthase (388 aa).

Residues R39 and R45 each coordinate NADP(+). Residues 132 to 134 (RSS), 251 to 252 (NA), G296, 311 to 315 (KPIPT), and R337 contribute to the FMN site.

The protein belongs to the chorismate synthase family. As to quaternary structure, homotetramer. FMNH2 is required as a cofactor.

The catalysed reaction is 5-O-(1-carboxyvinyl)-3-phosphoshikimate = chorismate + phosphate. It participates in metabolic intermediate biosynthesis; chorismate biosynthesis; chorismate from D-erythrose 4-phosphate and phosphoenolpyruvate: step 7/7. Functionally, catalyzes the anti-1,4-elimination of the C-3 phosphate and the C-6 proR hydrogen from 5-enolpyruvylshikimate-3-phosphate (EPSP) to yield chorismate, which is the branch point compound that serves as the starting substrate for the three terminal pathways of aromatic amino acid biosynthesis. This reaction introduces a second double bond into the aromatic ring system. This is Chorismate synthase from Staphylococcus carnosus (strain TM300).